The primary structure comprises 98 residues: Co-chaperonin GroES (98 aa).

This sequence belongs to the GroES chaperonin family. As to quaternary structure, heptamer of 7 subunits arranged in a ring. Interacts with the chaperonin GroEL.

Its subcellular location is the cytoplasm. Its function is as follows. Together with the chaperonin GroEL, plays an essential role in assisting protein folding. The GroEL-GroES system forms a nano-cage that allows encapsulation of the non-native substrate proteins and provides a physical environment optimized to promote and accelerate protein folding. GroES binds to the apical surface of the GroEL ring, thereby capping the opening of the GroEL channel. The chain is Co-chaperonin GroES from Brucella abortus (strain S19).